Here is a 412-residue protein sequence, read N- to C-terminus: Argininosuccinate synthase (412 aa).

ATP is bound by residues 20–28 and alanine 48; that span reads AYSGGLDTS. L-citrulline is bound by residues tyrosine 100 and serine 105. Residue glycine 130 coordinates ATP. L-aspartate-binding residues include threonine 132, asparagine 136, and aspartate 137. Asparagine 136 contacts L-citrulline. L-citrulline contacts are provided by arginine 140, serine 189, serine 198, glutamate 274, and tyrosine 286.

Belongs to the argininosuccinate synthase family. Type 1 subfamily. Homotetramer.

It localises to the cytoplasm. It carries out the reaction L-citrulline + L-aspartate + ATP = 2-(N(omega)-L-arginino)succinate + AMP + diphosphate + H(+). It functions in the pathway amino-acid biosynthesis; L-arginine biosynthesis; L-arginine from L-ornithine and carbamoyl phosphate: step 2/3. In Shewanella pealeana (strain ATCC 700345 / ANG-SQ1), this protein is Argininosuccinate synthase.